Here is a 120-residue protein sequence, read N- to C-terminus: MESQAKVKISDKAEGIIERDVQNAVIGRREILLKVYHMGSGTPSRKDIIKAISQAFASQENLVVVRKISTSYGAGISNVKLHIYKSREILEKIEPKYLLDRDAGTKQKKGGSKGGQGAKG.

Residues 101 to 120 are disordered; it reads RDAGTKQKKGGSKGGQGAKG.

The protein belongs to the eukaryotic ribosomal protein eS24 family.

The protein is Small ribosomal subunit protein eS24 of Saccharolobus islandicus (strain M.16.4 / Kamchatka #3) (Sulfolobus islandicus).